The primary structure comprises 594 residues: UvrABC system protein C (594 aa).

Residues 13–99 (NGSGVYQYFD…IKQLKPKYNI (87 aa)) enclose the GIY-YIG domain. The 36-residue stretch at 205–240 (DKLIKELQLKMDRLSSNLRFEEALIYRDRISKIQKI) folds into the UVR domain.

This sequence belongs to the UvrC family. As to quaternary structure, interacts with UvrB in an incision complex.

Its subcellular location is the cytoplasm. Its function is as follows. The UvrABC repair system catalyzes the recognition and processing of DNA lesions. UvrC both incises the 5' and 3' sides of the lesion. The N-terminal half is responsible for the 3' incision and the C-terminal half is responsible for the 5' incision. The chain is UvrABC system protein C from Helicobacter acinonychis (strain Sheeba).